The sequence spans 594 residues: DNA polymerase epsilon subunit B (594 aa).

The protein belongs to the DNA polymerase epsilon subunit B family. In terms of assembly, heterotetramer. Consists of four subunits: pol2, dpb2, dpb3 and dpb4. Interacts with dpb3.

It localises to the nucleus. Its function is as follows. As accessory component of the DNA polymerase epsilon (DNA polymerase II) participates in chromosomal DNA replication. The protein is DNA polymerase epsilon subunit B (dpb2) of Schizosaccharomyces pombe (strain 972 / ATCC 24843) (Fission yeast).